Reading from the N-terminus, the 352-residue chain is Minor capsid protein VP2 (352 aa).

Gly2 carries the N-myristoyl glycine; by host lipid modification. Positions 273 to 308 (SGEFIEKFEAPGGANQRTAPQWMLPLLLGLYGSVTS) are D1. Residues 290-310 (TAPQWMLPLLLGLYGSVTSAL) traverse the membrane as a helical segment. A disordered region spans residues 313-352 (YEDGPNKKKRKLSRGSSQKTKGTSASAKARHKRRNRSSRS). The interval 313–352 (YEDGPNKKKRKLSRGSSQKTKGTSASAKARHKRRNRSSRS) is DNA-binding. Positions 316–324 (GPNKKKRKL) match the Nuclear localization signal motif. Positions 326–338 (RGSSQKTKGTSAS) are enriched in polar residues. The span at 340 to 352 (KARHKRRNRSSRS) shows a compositional bias: basic residues.

This sequence belongs to the polyomaviruses capsid protein VP2 family. In terms of assembly, forms homooligomers, and heterooligomers with VP3 in the endoplasmic reticulum membrane. Interacts (via D1 domain) with VP1. Interacts (via D1 domain) with VP1. Interacts (via C-terminus) with host SP1, this is probably also the case for VP2; this interaction represses SP1 activation of the SV40 early promoter and participates in virion assembly. Interacts (via nuclear localization signal) with host importin alpha2-beta heterodimer. As to quaternary structure, oligomerizes with VP3 in the nucleus.

The protein resides in the virion. It localises to the host nucleus. It is found in the host endoplasmic reticulum. Its subcellular location is the host endoplasmic reticulum membrane. Its function is as follows. Structural protein that resides within the core of the capsid surrounded by 72 VP1 pentamers. Following virus endocytosis and trafficking to the endoplasmic reticulum, VP2 and VP3 form oligomers and integrate into the endoplasmic reticulum membrane. Heterooligomer VP2-VP3 may create a viroporin for transporting the viral genome across the endoplasmic reticulum membrane to the cytoplasm. Nuclear entry of the viral DNA involves the selective exposure and importin recognition of VP2 or VP3 nuclear localization signal (shared C-terminus). Plays a role in virion assembly within the nucleus in particular through a DNA-binding domain located in the C-terminal region. An N-terminal myristoylation suggests a scaffold function for virion assembly. The viral progenies exit the cells by lytic release. Isoform VP2 may repress SP1 activation of the SV40 early promoter, via specific protein-protein and protein-DNA interactions. Structural protein that resides within the core of the capsid surrounded by 72 VP1 pentamers. Following virus entry, VP2 and VP3 form oligomers and integrate into the endoplasmic reticulum membrane. Heterooligomer VP2-VP3 may create a viroporin for transporting the viral genome across the endoplasmic reticulum membrane. Essential for focus formation and virus endoplasmic reticulum-to-cytosol membrane transport, required to recruit selective cellular components to the foci in the ER membrane. Nuclear entry of the viral DNA involves the selective exposure and importin recognition of VP2 or VP3 nuclear localization signal (shared C-terminus). Isoform VP3 represses SP1 activation of the SV40 early promoter, via specific protein-protein and protein-DNA interactions. SP1 additionally participates in recruiting VP3 to the SV40 minichromosome during SV40 assembly. Plays a role in virion assembly within the nucleus. May initiate host cell lysis when associated with VP4. Functionally, viroporin inducing perforation of cellular membranes to trigger virus progeny release. Forms pores of 3 nm inner diameter. VP4 is expressed about 24 hours after the late structural proteins and is not incorporated into the mature virion. The polypeptide is Minor capsid protein VP2 (Simian virus 40 (SV40)).